Here is a 706-residue protein sequence, read N- to C-terminus: Centrosomal protein kizuna (706 aa).

Residues 63–113 (QRAKTRNLELLGNVENLASKLKEFSIDCSRLLQKRMEYKNHITRLKKDRRK) are a coiled coil. Residues 105–116 (TRLKKDRRKMGS) are compositionally biased toward basic residues. Disordered regions lie at residues 105–184 (TRLK…LCMH), 215–347 (VREK…ASRG), 571–603 (EIKPARPSGTNAQTGEEQEIQSAEEDSADQSPV), 620–665 (SVAQ…KTKP), and 677–706 (ESDDSNSEIEMALRPQSCNTSSHDFDDFYD). The span at 118–127 (GKSEADEHPS) shows a compositional bias: basic and acidic residues. 2 stretches are compositionally biased toward polar residues: residues 128-156 (RLSTQGLSQSAAIFMGHQTSNGSSRNDGA) and 164-180 (HTEQIPNHPSLPPSQSG). The segment covering 215–251 (VREKQMESDWDISQRAREQQRQEELKSPHTTLKEAEV) has biased composition (basic and acidic residues). Low complexity predominate over residues 272-283 (TRSPSPDTTDPS). Residues 293 to 304 (GEDEEESAEDKD) are compositionally biased toward acidic residues. Polar residues predominate over residues 308-320 (PINQNHSDYTSNI). Residues 586–598 (EEQEIQSAEEDSA) show a composition bias toward acidic residues. Positions 638-648 (PDAHKLEKPEV) are enriched in basic and acidic residues.

The protein belongs to the kizuna family.

Its subcellular location is the cytoplasm. It is found in the cytoskeleton. The protein localises to the microtubule organizing center. The protein resides in the centrosome. It localises to the cilium basal body. Functionally, centrosomal protein required for establishing a robust mitotic centrosome architecture that can endure the forces that converge on the centrosomes during spindle formation. Required for stabilizing the expanded pericentriolar material around the centriole. The protein is Centrosomal protein kizuna (kiz) of Danio rerio (Zebrafish).